The following is a 941-amino-acid chain: Isoleucine--tRNA ligase (941 aa).

Positions 58–68 (PYANGDIHIGH) match the 'HIGH' region motif. Glu-562 serves as a coordination point for L-isoleucyl-5'-AMP. The 'KMSKS' region signature appears at 603 to 607 (KMSKS). Lys-606 serves as a coordination point for ATP. Zn(2+) is bound by residues Cys-904, Cys-907, Cys-924, and Cys-927.

This sequence belongs to the class-I aminoacyl-tRNA synthetase family. IleS type 1 subfamily. As to quaternary structure, monomer. Requires Zn(2+) as cofactor.

The protein resides in the cytoplasm. It catalyses the reaction tRNA(Ile) + L-isoleucine + ATP = L-isoleucyl-tRNA(Ile) + AMP + diphosphate. Its function is as follows. Catalyzes the attachment of isoleucine to tRNA(Ile). As IleRS can inadvertently accommodate and process structurally similar amino acids such as valine, to avoid such errors it has two additional distinct tRNA(Ile)-dependent editing activities. One activity is designated as 'pretransfer' editing and involves the hydrolysis of activated Val-AMP. The other activity is designated 'posttransfer' editing and involves deacylation of mischarged Val-tRNA(Ile). The sequence is that of Isoleucine--tRNA ligase from Alkalilimnicola ehrlichii (strain ATCC BAA-1101 / DSM 17681 / MLHE-1).